We begin with the raw amino-acid sequence, 128 residues long: Large-conductance mechanosensitive channel (128 aa).

The next 2 helical transmembrane spans lie at 10 to 30 (FAMR…SAFG) and 76 to 96 (GLFI…FMMI).

It belongs to the MscL family. In terms of assembly, homopentamer.

It localises to the cell inner membrane. In terms of biological role, channel that opens in response to stretch forces in the membrane lipid bilayer. May participate in the regulation of osmotic pressure changes within the cell. This chain is Large-conductance mechanosensitive channel, found in Haemophilus influenzae (strain PittEE).